Consider the following 605-residue polypeptide: Capsid scaffolding protein (605 aa).

Catalysis depends on charge relay system residues His48, Ser116, and His139. The segment at 235–275 is disordered; the sequence is ASDAPDLQKPDKALQSPPPASTDPDTMLSGNAGEGATACGG. The interval 281–300 is interaction with pAP; sequence QDLISVPRNTFMTLLQTNLD. Disordered stretches follow at residues 403-432 and 489-588; these read DYVP…PGED and PHQS…KSVS. A Nuclear localization signal motif is present at residues 410–416; that stretch reads RSNKRKR. Over residues 568-579 the composition is skewed to polar residues; that stretch reads ASASGVAQSKEP. The interaction with major capsid protein stretch occupies residues 585-605; that stretch reads KSVSAHLKSIFCEELLNKRVA.

This sequence belongs to the herpesviridae capsid scaffolding protein family. In terms of assembly, homomultimer. Interacts with major capsid protein. Exists in a monomer-dimer equilibrium with the dimer being the active species. Capsid scaffolding protein is cleaved by assemblin after formation of the spherical procapsid. As a result, the capsid obtains its mature, icosahedral shape. Cleavages occur at two or more sites: release (R-site) and maturation (M-site).

It is found in the host cytoplasm. The protein localises to the host nucleus. The enzyme catalyses Cleaves -Ala-|-Ser- and -Ala-|-Ala- bonds in the scaffold protein.. Acts as a scaffold protein by binding major capsid protein in the cytoplasm, inducing the nuclear localization of both proteins. Multimerizes in the nucleus such as major capsid protein forms the icosahedral T=16 capsid. Autocatalytic cleavage releases the assembly protein, and subsequently abolishes interaction with major capsid protein. Cleavages products are evicted from the capsid before or during DNA packaging. Functionally, protease that plays an essential role in virion assembly within the nucleus. Catalyzes the cleavage of the assembly protein after formation of the spherical procapsid. By that cleavage, the capsid matures and gains its icosahedral shape. The cleavage sites seem to include -Ala-Ser-, -Ala-Ala-, as well as Ala-Thr bonds. Assemblin and cleavages products are evicted from the capsid before or during DNA packaging. Its function is as follows. Plays a major role in capsid assembly. Acts as a scaffold protein by binding major capsid protein. Multimerizes in the nucleus such as major capsid protein forms the icosahedral T=16 capsid. Cleaved by assemblin after capsid completion. The cleavages products are evicted from the capsid before or during DNA packaging. The polypeptide is Capsid scaffolding protein (Epstein-Barr virus (strain AG876) (HHV-4)).